Consider the following 445-residue polypeptide: Phosphoglucosamine mutase (445 aa).

Ser102 acts as the Phosphoserine intermediate in catalysis. 4 residues coordinate Mg(2+): Ser102, Asp241, Asp243, and Asp245. Ser102 carries the phosphoserine modification.

Belongs to the phosphohexose mutase family. Mg(2+) serves as cofactor. In terms of processing, activated by phosphorylation.

It carries out the reaction alpha-D-glucosamine 1-phosphate = D-glucosamine 6-phosphate. Its function is as follows. Catalyzes the conversion of glucosamine-6-phosphate to glucosamine-1-phosphate. The polypeptide is Phosphoglucosamine mutase (Salmonella paratyphi A (strain ATCC 9150 / SARB42)).